The primary structure comprises 187 residues: UPF0301 protein Ppha_2142 (187 aa).

It belongs to the UPF0301 (AlgH) family.

This is UPF0301 protein Ppha_2142 from Pelodictyon phaeoclathratiforme (strain DSM 5477 / BU-1).